The following is a 352-amino-acid chain: Beta-methylmalyl-CoA dehydratase (352 aa).

One can recognise a MaoC-like domain in the interval 16-129 (LGQTIVHATP…GKTGVVYVHS (114 aa)). Residues 62–65 (PIDS), 85–88 (IANL), and 96–98 (GAV) each bind substrate.

As to quaternary structure, homodimer.

It carries out the reaction (2R,3S)-beta-methylmalyl-CoA = 2-methylfumaryl-CoA + H2O. In terms of biological role, involved in the glyoxylate assimilation cycle used to regenerate acetyl-CoA and produce pyruvate as universal precursor for biosynthesis. Catalyzes the reversible dehydration of beta-methylmalyl-CoA ((2R,3S)-beta-methylmalyl-CoA) to yield mesaconyl-CoA (2-methylfumaryl-CoA). This chain is Beta-methylmalyl-CoA dehydratase (mch), found in Chloroflexus aurantiacus (strain ATCC 29366 / DSM 635 / J-10-fl).